The sequence spans 274 residues: Triosephosphate isomerase (274 aa).

A substrate-binding site is contributed by N13–K15. The Electrophile role is filled by H98. The active-site Proton acceptor is the E170. Substrate contacts are provided by G176 and S216.

It belongs to the triosephosphate isomerase family. As to quaternary structure, homodimer.

The protein resides in the cytoplasm. The catalysed reaction is D-glyceraldehyde 3-phosphate = dihydroxyacetone phosphate. It functions in the pathway carbohydrate biosynthesis; gluconeogenesis. The protein operates within carbohydrate degradation; glycolysis; D-glyceraldehyde 3-phosphate from glycerone phosphate: step 1/1. Its function is as follows. Involved in the gluconeogenesis. Catalyzes stereospecifically the conversion of dihydroxyacetone phosphate (DHAP) to D-glyceraldehyde-3-phosphate (G3P). The polypeptide is Triosephosphate isomerase (Aster yellows witches'-broom phytoplasma (strain AYWB)).